The following is a 403-amino-acid chain: DNA polymerase IV (403 aa).

Positions 23-203 (IAHMDCDAFY…KPVNILPGVG (181 aa)) constitute a UmuC domain. D27 and D120 together coordinate Mg(2+). Residue E121 is part of the active site.

The protein belongs to the DNA polymerase type-Y family. In terms of assembly, monomer. Mg(2+) is required as a cofactor.

The protein resides in the cytoplasm. It carries out the reaction DNA(n) + a 2'-deoxyribonucleoside 5'-triphosphate = DNA(n+1) + diphosphate. Poorly processive, error-prone DNA polymerase involved in untargeted mutagenesis. Copies undamaged DNA at stalled replication forks, which arise in vivo from mismatched or misaligned primer ends. These misaligned primers can be extended by PolIV. Exhibits no 3'-5' exonuclease (proofreading) activity. May be involved in translesional synthesis, in conjunction with the beta clamp from PolIII. This chain is DNA polymerase IV, found in Caulobacter vibrioides (strain ATCC 19089 / CIP 103742 / CB 15) (Caulobacter crescentus).